The primary structure comprises 577 residues: Acyl-coenzyme A synthetase ACSM2B, mitochondrial (577 aa).

A mitochondrion-targeting transit peptide spans 1-46 (MHWLRKVQGLCTLWGTQMSSRTLYINSRQLVSLQWGHQEVPAKFNF). Position 139 (Gln-139) interacts with CoA. Residues 221-229 (TSGTSGLPK), 359-364 (EFYGQT), Asp-446, and Arg-461 contribute to the ATP site. Residue Thr-364 participates in substrate binding. 469–471 (SGY) contributes to the CoA binding site. Substrate is bound at residue Arg-472. Residue Arg-501 coordinates CoA. The residue at position 513 (Ser-513) is a Phosphoserine. CoA-binding positions include Lys-532 and 540-542 (YPR). Lys-557 serves as a coordination point for ATP.

The protein belongs to the ATP-dependent AMP-binding enzyme family. As to quaternary structure, monomer. Mg(2+) serves as cofactor. The cofactor is Mn(2+). Detected in liver.

Its subcellular location is the mitochondrion. The enzyme catalyses a medium-chain fatty acid + ATP + CoA = a medium-chain fatty acyl-CoA + AMP + diphosphate. It catalyses the reaction benzoate + ATP + CoA = benzoyl-CoA + AMP + diphosphate. It carries out the reaction hexanoate + ATP + CoA = hexanoyl-CoA + AMP + diphosphate. The catalysed reaction is butanoate + ATP + CoA = butanoyl-CoA + AMP + diphosphate. The enzyme catalyses octanoate + ATP + CoA = octanoyl-CoA + AMP + diphosphate. It catalyses the reaction decanoate + ATP + CoA = decanoyl-CoA + AMP + diphosphate. Activated by monovalent cations, such as potassium, rubidium or ammonium. In terms of biological role, catalyzes the activation of fatty acids by CoA to produce an acyl-CoA, the first step in fatty acid metabolism. Capable of activating medium-chain fatty acids (e.g. butyric (C4) to decanoic (C10) acids), and certain carboxylate-containing xenobiotics, e.g. benzoate. The sequence is that of Acyl-coenzyme A synthetase ACSM2B, mitochondrial (ACSM2B) from Homo sapiens (Human).